The following is a 286-amino-acid chain: Plasma membrane ascorbate-dependent reductase CYBRD1 (286 aa).

The Cytoplasmic segment spans residues 1–7; sequence MAMEGYR. The helical transmembrane segment at 8-32 threads the bilayer; the sequence is GFLGLLVSALLVGFLSVIFVLIWVL. A Cytochrome b561 domain is found at 15–220; sequence SALLVGFLSV…FGALIFWIVT (206 aa). Residues 33–47 lie on the Extracellular side of the membrane; it reads HFREGLGWDGGALEF. The chain crosses the membrane as a helical span at residues 48-69; the sequence is NWHPVLAVTGFVFIQGIAIIVY. Heme b-binding residues include His-50, Arg-70, and Lys-79. Residues 70–78 are Cytoplasmic-facing; that stretch reads RLPWTWKCS. L-ascorbate-binding residues include Lys-79 and Lys-83. A helical membrane pass occupies residues 79 to 105; that stretch reads KFLMKSIHAGLNAVAAILAIISVVAVF. His-86 is a heme b binding site. Topologically, residues 106–118 are extracellular; the sequence is DYHNVRKIPHMYS. His-108 contributes to the Fe(3+) binding site. Residues 115–118 and His-120 contribute to the heme b site; that span reads HMYS. The chain crosses the membrane as a helical span at residues 119-144; that stretch reads LHSWVGLTVLILYIQQLVVGFFIFLL. The Cytoplasmic segment spans residues 145-151; sequence PWAPPSL. Arg-152 lines the L-ascorbate pocket. A helical transmembrane segment spans residues 152 to 179; that stretch reads RAIVMPIHVYSGLLLFGTVIATVLMGVT. Residues His-159 and Glu-180 each coordinate heme b. The Extracellular portion of the chain corresponds to 180-197; that stretch reads EKLFFVLKNPSYHSFPPE. The helical transmembrane segment at 198–222 threads the bilayer; the sequence is GVFTNTLGLLILVFGALIFWIVTRP. The Cytoplasmic segment spans residues 223-286; sequence QWKRPREPGS…LVDTGQRSTM (64 aa). Heme b is bound at residue Lys-225. Ser-232 is modified (phosphoserine). A Phosphothreonine modification is found at Thr-285.

In terms of assembly, homodimer. The cofactor is heme b. As to expression, highly expressed in all regions of the small intestine and colon studied in suckling animals. However, after weaning, when iron absorption declines significantly, strong expression is retained only in the duodenum. Also expressed in respiratory epithelium.

The protein resides in the cell membrane. Its subcellular location is the apical cell membrane. The catalysed reaction is Fe(3+)(out) + L-ascorbate(in) = monodehydro-L-ascorbate radical(in) + Fe(2+)(out) + H(+). The enzyme catalyses Cu(2+)(out) + L-ascorbate(in) = Cu(+)(out) + monodehydro-L-ascorbate radical(in) + H(+). It catalyses the reaction monodehydro-L-ascorbate radical(out) + L-ascorbate(in) = monodehydro-L-ascorbate radical(in) + L-ascorbate(out). Functionally, plasma membrane reductase that uses cytoplasmic ascorbate as an electron donor to reduce extracellular Fe(3+) into Fe(2+). Probably functions in dietary iron absorption at the brush border of duodenal enterocytes by producing Fe(2+), the divalent form of iron that can be transported into enterocytes. It is also able to reduce extracellular monodehydro-L-ascorbate and may be involved in extracellular ascorbate regeneration by erythrocytes in blood. May also act as a ferrireductase in airway epithelial cells. May also function as a cupric transmembrane reductase. This chain is Plasma membrane ascorbate-dependent reductase CYBRD1, found in Rattus norvegicus (Rat).